A 459-amino-acid polypeptide reads, in one-letter code: uncharacterized protein (459 aa).

Position 285 is an N6-(pyridoxal phosphate)lysine (K285).

Belongs to the class-III pyridoxal-phosphate-dependent aminotransferase family.

It localises to the cytoplasm. This is an uncharacterized protein from Schizosaccharomyces pombe (strain 972 / ATCC 24843) (Fission yeast).